The chain runs to 72 residues: UPF0352 protein Shal_2512 (72 aa).

Belongs to the UPF0352 family.

This chain is UPF0352 protein Shal_2512, found in Shewanella halifaxensis (strain HAW-EB4).